The chain runs to 332 residues: Small ribosomal subunit protein uS2 (332 aa).

The protein belongs to the universal ribosomal protein uS2 family.

The protein is Small ribosomal subunit protein uS2 of Afipia carboxidovorans (strain ATCC 49405 / DSM 1227 / KCTC 32145 / OM5) (Oligotropha carboxidovorans).